Here is a 187-residue protein sequence, read N- to C-terminus: Putative protein 2 (187 aa).

Transmembrane regions (helical) follow at residues Met-10–Val-27 and Val-99–Val-121.

Belongs to the TMEM9 family.

It is found in the membrane. The chain is Putative protein 2 from Takifugu rubripes (Japanese pufferfish).